Consider the following 609-residue polypeptide: Glutamine--fructose-6-phosphate aminotransferase [isomerizing] (609 aa).

The Nucleophile; for GATase activity role is filled by cysteine 2. A Glutamine amidotransferase type-2 domain is found at 2 to 218; the sequence is CGIVGAIAQR…EGDIAEITRR (217 aa). SIS domains lie at 286–426 and 458–599; these read ADEL…LKGL and LAED…VDQP. Lysine 604 (for Fru-6P isomerization activity) is an active-site residue.

As to quaternary structure, homodimer.

The protein localises to the cytoplasm. It catalyses the reaction D-fructose 6-phosphate + L-glutamine = D-glucosamine 6-phosphate + L-glutamate. Functionally, catalyzes the first step in hexosamine metabolism, converting fructose-6P into glucosamine-6P using glutamine as a nitrogen source. The chain is Glutamine--fructose-6-phosphate aminotransferase [isomerizing] from Escherichia coli O157:H7.